A 290-amino-acid chain; its full sequence is Cbb3-type cytochrome c oxidase subunit FixP (290 aa).

A helical transmembrane segment spans residues 33–53; sequence WWVITFYITIVWAIGYWIVYP. 2 consecutive Cytochrome c domains span residues 109 to 198 and 206 to 287; these read LARA…RSLS and YDAA…HSLG. Heme c contacts are provided by Cys122, Cys125, His126, Met173, Cys219, Cys222, His223, and Met264.

It belongs to the CcoP / FixP family. Component of the cbb3-type cytochrome c oxidase at least composed of FixN, FixO, FixQ and FixP. The cofactor is heme c.

The protein localises to the cell inner membrane. It functions in the pathway energy metabolism; oxidative phosphorylation. Its function is as follows. C-type cytochrome. Part of the cbb3-type cytochrome c oxidase complex. FixP subunit is required for transferring electrons from donor cytochrome c via its heme groups to FixO subunit. From there, electrons are shuttled to the catalytic binuclear center of FixN subunit where oxygen reduction takes place. The complex also functions as a proton pump. The protein is Cbb3-type cytochrome c oxidase subunit FixP of Bradyrhizobium sp. (strain ORS 278).